The sequence spans 506 residues: Pleckstrin homology domain-containing family D member 1 (506 aa).

Residues 28 to 136 (KVQLYGVLWK…WLEMLQESGK (109 aa)) form the PH domain. Residues 146-391 (EAMIKSLEAQ…KVRNKEKEER (246 aa)) are a coiled coil. Arg-503 is subject to Omega-N-methylarginine.

It belongs to the PLEKHD1 family.

In Homo sapiens (Human), this protein is Pleckstrin homology domain-containing family D member 1 (PLEKHD1).